Here is a 582-residue protein sequence, read N- to C-terminus: Zinc finger protein 319 (582 aa).

Low complexity predominate over residues 1–14 (MSESWQQPPQTQPQ). Residues 1-39 (MSESWQQPPQTQPQQPQPPQPQHHAEPPPALAEHTLPPG) are disordered. The segment at 76–100 (PKCGVCGHDLAHLSSPHEHQCLAGH) adopts a C2H2-type 1 zinc-finger fold. The C2H2-type 2; degenerate zinc finger occupies 104–126 (FQCTQCLKIFHQATDLLEHQCVQ). Residue K130 forms a Glycyl lysine isopeptide (Lys-Gly) (interchain with G-Cter in SUMO2) linkage. The C2H2-type 3 zinc finger occupies 132 to 154 (FVCGVCKMGFSLLTSLAQHHSSH). Residues 174–196 (EPATTAAPSLPAAPAPSTVTPAE) show a composition bias toward low complexity. The disordered stretch occupies residues 174–198 (EPATTAAPSLPAAPAPSTVTPAEQA). 3 consecutive C2H2-type zinc fingers follow at residues 202 to 224 (YSCP…ERIH), 230 to 252 (YKCT…KRTH), and 258 to 280 (YKCA…MYAH). Position 281 is a phosphoserine (S281). A C2H2-type 7; degenerate zinc finger spans residues 287-309 (FRCNVCELHFKESSELLQHPCTP). 3 consecutive C2H2-type zinc fingers follow at residues 315–337 (FRCG…ERTH), 343–365 (FKCD…RRTH), and 371–393 (FKCG…QHVH). The C2H2-type 11; degenerate zinc finger occupies 399 to 421 (FKCPVCQKGFDQSAELLRHKCLP). The segment at 428–450 (FKCPVCNKAYKRASALQKHQLAH) adopts a C2H2-type 12 zinc-finger fold. A C2H2-type 13; degenerate zinc finger spans residues 458-480 (LRCTLCERRFFSSSEFVQHRCDP). 3 C2H2-type zinc fingers span residues 486 to 508 (LKCP…RRVH), 514 to 536 (YKCP…QGVH), and 542 to 564 (FKCV…SAQH).

It belongs to the krueppel C2H2-type zinc-finger protein family.

The protein localises to the nucleus. In terms of biological role, may be involved in transcriptional regulation. The chain is Zinc finger protein 319 (ZNF319) from Homo sapiens (Human).